We begin with the raw amino-acid sequence, 97 residues long: Aspartyl/glutamyl-tRNA(Asn/Gln) amidotransferase subunit C (97 aa).

The protein belongs to the GatC family. In terms of assembly, heterotrimer of A, B and C subunits.

It catalyses the reaction L-glutamyl-tRNA(Gln) + L-glutamine + ATP + H2O = L-glutaminyl-tRNA(Gln) + L-glutamate + ADP + phosphate + H(+). The catalysed reaction is L-aspartyl-tRNA(Asn) + L-glutamine + ATP + H2O = L-asparaginyl-tRNA(Asn) + L-glutamate + ADP + phosphate + 2 H(+). Allows the formation of correctly charged Asn-tRNA(Asn) or Gln-tRNA(Gln) through the transamidation of misacylated Asp-tRNA(Asn) or Glu-tRNA(Gln) in organisms which lack either or both of asparaginyl-tRNA or glutaminyl-tRNA synthetases. The reaction takes place in the presence of glutamine and ATP through an activated phospho-Asp-tRNA(Asn) or phospho-Glu-tRNA(Gln). The protein is Aspartyl/glutamyl-tRNA(Asn/Gln) amidotransferase subunit C of Prochlorococcus marinus (strain MIT 9515).